A 440-amino-acid polypeptide reads, in one-letter code: 23S rRNA (uracil(1939)-C(5))-methyltransferase RlmD (440 aa).

The region spanning 10 to 68 (KALPTQAVEITIDNLDHHLTGVGRYQGKACFVEGVLPGEKVSVQITEQKKQYAHARLRQ) is the TRAM domain. [4Fe-4S] cluster is bound by residues C81, C87, C90, and C169. Q272, F301, N306, E322, D349, and D372 together coordinate S-adenosyl-L-methionine. The active-site Nucleophile is the C398.

This sequence belongs to the class I-like SAM-binding methyltransferase superfamily. RNA M5U methyltransferase family. RlmD subfamily.

The enzyme catalyses uridine(1939) in 23S rRNA + S-adenosyl-L-methionine = 5-methyluridine(1939) in 23S rRNA + S-adenosyl-L-homocysteine + H(+). Catalyzes the formation of 5-methyl-uridine at position 1939 (m5U1939) in 23S rRNA. This is 23S rRNA (uracil(1939)-C(5))-methyltransferase RlmD from Tolumonas auensis (strain DSM 9187 / NBRC 110442 / TA 4).